The following is a 706-amino-acid chain: Translation initiation factor IF-2 (706 aa).

The span at A55–D81 shows a compositional bias: basic and acidic residues. The tract at residues A55–I127 is disordered. Residues V82–K98 are compositionally biased toward low complexity. Residues V207–K376 enclose the tr-type G domain. The segment at G216 to T223 is G1. G216–T223 contacts GTP. Residues G241–H245 form a G2 region. Residues D262–G265 are G3. Residues D262–H266 and N316–D319 contribute to the GTP site. Residues N316–D319 form a G4 region. Positions S352–K354 are G5.

It belongs to the TRAFAC class translation factor GTPase superfamily. Classic translation factor GTPase family. IF-2 subfamily.

Its subcellular location is the cytoplasm. Functionally, one of the essential components for the initiation of protein synthesis. Protects formylmethionyl-tRNA from spontaneous hydrolysis and promotes its binding to the 30S ribosomal subunits. Also involved in the hydrolysis of GTP during the formation of the 70S ribosomal complex. The sequence is that of Translation initiation factor IF-2 from Bacillus pumilus (strain SAFR-032).